The chain runs to 199 residues: Copper transport protein CTR4 (199 aa).

A run of 2 helical transmembrane segments spans residues 62 to 82 and 152 to 172; these read KGMF…IELI and AFFV…FIFL.

It belongs to the copper transporter (Ctr) (TC 1.A.56) family. SLC31A subfamily.

Its subcellular location is the membrane. Its function is as follows. Required for high affinity copper (probably reduced Cu I) transport into the cell. Plays a role in fungal pathogenesis during host infection. This Cryptococcus neoformans var. grubii serotype A (strain H99 / ATCC 208821 / CBS 10515 / FGSC 9487) (Filobasidiella neoformans var. grubii) protein is Copper transport protein CTR4.